Here is a 208-residue protein sequence, read N- to C-terminus: Thymidylate kinase (208 aa).

An ATP-binding site is contributed by 10-17 (GPEGSGKT).

This sequence belongs to the thymidylate kinase family.

It catalyses the reaction dTMP + ATP = dTDP + ADP. Its function is as follows. Phosphorylation of dTMP to form dTDP in both de novo and salvage pathways of dTTP synthesis. In Bacillus cereus (strain AH187), this protein is Thymidylate kinase.